A 166-amino-acid polypeptide reads, in one-letter code: 3-hydroxyacyl-[acyl-carrier-protein] dehydratase FabZ (166 aa).

Residue histidine 72 is part of the active site.

Belongs to the thioester dehydratase family. FabZ subfamily.

It is found in the cytoplasm. The enzyme catalyses a (3R)-hydroxyacyl-[ACP] = a (2E)-enoyl-[ACP] + H2O. In terms of biological role, involved in unsaturated fatty acids biosynthesis. Catalyzes the dehydration of short chain beta-hydroxyacyl-ACPs and long chain saturated and unsaturated beta-hydroxyacyl-ACPs. This is 3-hydroxyacyl-[acyl-carrier-protein] dehydratase FabZ from Synechococcus sp. (strain JA-2-3B'a(2-13)) (Cyanobacteria bacterium Yellowstone B-Prime).